Consider the following 660-residue polypeptide: Pentatricopeptide repeat-containing protein At4g20090 (660 aa).

PPR repeat units follow at residues 76-110, 111-141, 147-181, 186-220, 221-255, 256-290, 291-325, 326-360, 361-395, 396-430, 431-465, 466-500, 501-535, 539-573, and 574-609; these read GDSTLSSMIESYANSGDFDSVEKLLSRIRLENRVI, IERSFIVVFRAYGKAHLPDKAVDLFHRMVDE, SVKSFNSVLNVIINEGLYHRGLEFYDYVVNSNMNM, NGLSFNLVIKALCKLRFVDRAIEVFRGMPERKCLP, DGYTYCTLMDGLCKEERIDEAVLLLDEMQSEGCSP, SPVIYNVLIDGLCKKGDLTRVTKLVDNMFLKGCVP, NEVTYNTLIHGLCLKGKLDKAVSLLERMVSSKCIP, NDVTYGTLINGLVKQRRATDAVRLLSSMEERGYHL, NQHIYSVLISGLFKEGKAEEAMSLWRKMAEKGCKP, NIVVYSVLVDGLCREGKPNEAKEILNRMIASGCLP, NAYTYSSLMKGFFKTGLCEEAVQVWKEMDKTGCSR, NKFCYSVLIDGLCGVGRVKEAMMVWSKMLTIGIKP, DTVAYSSIIKGLCGIGSMDAALKLYHEMLCQEEPK, DVVTYNILLDGLCMQKDISRAVDLLNSMLDRGCDP, and DVITCNTFLNTLSEKSNSCDKGRSFLEELVVRLLKR.

The protein belongs to the PPR family. P subfamily.

In terms of biological role, may play a role in embryogenesis. The sequence is that of Pentatricopeptide repeat-containing protein At4g20090 (EMB1025) from Arabidopsis thaliana (Mouse-ear cress).